A 267-amino-acid chain; its full sequence is Small ribosomal subunit protein uS2 (267 aa).

Residues 247-267 (LEDDILEDVEDEEEGDPEQGE) form a disordered region.

It belongs to the universal ribosomal protein uS2 family.

The polypeptide is Small ribosomal subunit protein uS2 (Synechococcus sp. (strain JA-3-3Ab) (Cyanobacteria bacterium Yellowstone A-Prime)).